The primary structure comprises 368 residues: Chaperone protein DnaJ (368 aa).

A J domain is found at 5–65; that stretch reads DYYEVLGLTK…QKKARYDQFG (61 aa). A CR-type zinc finger spans residues 125–207; sequence GKETEIEIPK…CRGEGKVQKR (83 aa). Residues Cys-138, Cys-141, Cys-155, Cys-158, Cys-181, Cys-184, Cys-195, and Cys-198 each contribute to the Zn(2+) site. CXXCXGXG motif repeat units lie at residues 138–145, 155–162, 181–188, and 195–202; these read CETCHGSG, CSTCNGAG, CTTCHGTG, and CSTCRGEG.

Belongs to the DnaJ family. Homodimer. Zn(2+) is required as a cofactor.

It is found in the cytoplasm. Participates actively in the response to hyperosmotic and heat shock by preventing the aggregation of stress-denatured proteins and by disaggregating proteins, also in an autonomous, DnaK-independent fashion. Unfolded proteins bind initially to DnaJ; upon interaction with the DnaJ-bound protein, DnaK hydrolyzes its bound ATP, resulting in the formation of a stable complex. GrpE releases ADP from DnaK; ATP binding to DnaK triggers the release of the substrate protein, thus completing the reaction cycle. Several rounds of ATP-dependent interactions between DnaJ, DnaK and GrpE are required for fully efficient folding. Also involved, together with DnaK and GrpE, in the DNA replication of plasmids through activation of initiation proteins. The sequence is that of Chaperone protein DnaJ from Lysinibacillus sphaericus (Bacillus sphaericus).